Here is a 341-residue protein sequence, read N- to C-terminus: Glyceraldehyde-3-phosphate dehydrogenase (341 aa).

NAD(+)-binding positions include 11-12 and G110; that span reads TI. A D-glyceraldehyde 3-phosphate-binding site is contributed by 139–141; it reads SCN. The active-site Nucleophile is C140. R168 is an NAD(+) binding site. Residue 194–195 participates in D-glyceraldehyde 3-phosphate binding; it reads HG. Q302 contributes to the NAD(+) binding site.

The protein belongs to the glyceraldehyde-3-phosphate dehydrogenase family. Homotetramer.

It localises to the cytoplasm. The enzyme catalyses D-glyceraldehyde 3-phosphate + phosphate + NADP(+) = (2R)-3-phospho-glyceroyl phosphate + NADPH + H(+). It catalyses the reaction D-glyceraldehyde 3-phosphate + phosphate + NAD(+) = (2R)-3-phospho-glyceroyl phosphate + NADH + H(+). Its pathway is carbohydrate degradation; glycolysis; pyruvate from D-glyceraldehyde 3-phosphate: step 1/5. In Methanoculleus marisnigri (strain ATCC 35101 / DSM 1498 / JR1), this protein is Glyceraldehyde-3-phosphate dehydrogenase.